The sequence spans 65 residues: Large ribosomal subunit protein bL35 (65 aa).

Belongs to the bacterial ribosomal protein bL35 family.

This is Large ribosomal subunit protein bL35 from Edwardsiella ictaluri (strain 93-146).